Here is a 443-residue protein sequence, read N- to C-terminus: Putative metabolite transport protein YaaU (443 aa).

Topologically, residues 1–18 (MQPSRNFDDLKFSSIHRR) are cytoplasmic. The helical transmembrane segment at 19 to 39 (ILLWGSGGPFLDGYVLVMIGV) threads the bilayer. The Periplasmic segment spans residues 40–53 (ALEQLTPALKLDAD). Residues 54-74 (WIGLLGAGTLAGLFVGTSLFG) traverse the membrane as a helical segment. At 75–84 (YISDKVGRRK) the chain is on the cytoplasmic side. Residues 85–105 (MFLIDIIAIGVISVATMFVSS) traverse the membrane as a helical segment. At 106–113 (PVELLVMR) the chain is on the periplasmic side. A helical transmembrane segment spans residues 114 to 134 (VLIGIVIGADYPIATSMITEF). The Cytoplasmic portion of the chain corresponds to 135-145 (SSTRQRAFSIS). Residues 146–166 (FIAAMWYVGATCADLVGYWLY) traverse the membrane as a helical segment. The Periplasmic portion of the chain corresponds to 167–173 (DVEGGWR). The chain crosses the membrane as a helical span at residues 174-194 (WMLGSAAIPCLLILIGRFELP). Over 195 to 241 (ESPRWLLRKGRVKECEEMMIKLFGEPVAFDEEQPQQTRFRDLFNRRH) the chain is Cytoplasmic. A helical transmembrane segment spans residues 242-262 (FPFVLFVAAIWTCQVIPMFAI). Residues 263–282 (YTFGPQIVGLLGLGVGKNAA) are Periplasmic-facing. A helical transmembrane segment spans residues 283-303 (LGNVVISLFFMLGCIPPMLWL). The Cytoplasmic portion of the chain corresponds to 304-309 (NTAGRR). The chain crosses the membrane as a helical span at residues 310 to 329 (PLLIGSFAMMTLALAVLGLI). The Periplasmic segment spans residues 330–334 (PDMGI). A helical transmembrane segment spans residues 335 to 357 (WLVVMAFAVYAFFSGGPGNLQWL). The Cytoplasmic portion of the chain corresponds to 358-373 (YPNELFPTDIRASAVG). Residues 374 to 394 (VIMSLSRIGTIVSTWALPIFI) traverse the membrane as a helical segment. Residues 395–401 (NNYGISN) lie on the Periplasmic side of the membrane. The chain crosses the membrane as a helical span at residues 402-422 (TMLMGAGISLFGLLISVAFAP). The Cytoplasmic segment spans residues 423 to 443 (ETRGMSLAQTSNMTIRGQRMG).

It belongs to the major facilitator superfamily. Sugar transporter (TC 2.A.1.1) family.

Its subcellular location is the cell inner membrane. The protein is Putative metabolite transport protein YaaU (yaaU) of Escherichia coli (strain K12).